Consider the following 101-residue polypeptide: ATP-dependent Clp protease adapter protein ClpS (101 aa).

The protein belongs to the ClpS family. Binds to the N-terminal domain of the chaperone ClpA.

Functionally, involved in the modulation of the specificity of the ClpAP-mediated ATP-dependent protein degradation. This Clostridium acetobutylicum (strain ATCC 824 / DSM 792 / JCM 1419 / IAM 19013 / LMG 5710 / NBRC 13948 / NRRL B-527 / VKM B-1787 / 2291 / W) protein is ATP-dependent Clp protease adapter protein ClpS.